The sequence spans 384 residues: Putative glutamate--cysteine ligase 2 (384 aa).

Belongs to the glutamate--cysteine ligase type 2 family. YbdK subfamily.

It catalyses the reaction L-cysteine + L-glutamate + ATP = gamma-L-glutamyl-L-cysteine + ADP + phosphate + H(+). Functionally, ATP-dependent carboxylate-amine ligase which exhibits weak glutamate--cysteine ligase activity. The polypeptide is Putative glutamate--cysteine ligase 2 (Ruegeria pomeroyi (strain ATCC 700808 / DSM 15171 / DSS-3) (Silicibacter pomeroyi)).